A 425-amino-acid polypeptide reads, in one-letter code: Histone-binding protein RBBP4 (425 aa).

At Ala-2 the chain carries N-acetylalanine. Lys-4 carries the N6-acetyllysine; alternate modification. Lys-4 is covalently cross-linked (Glycyl lysine isopeptide (Lys-Gly) (interchain with G-Cter in SUMO2); alternate). Lys-4 participates in a covalent cross-link: Glycyl lysine isopeptide (Lys-Gly) (interchain with G-Cter in ubiquitin); alternate. 7 WD repeats span residues Tyr-32–Gly-125, Glu-126–Gly-175, His-176–Phe-223, Gly-225–Asp-270, Ala-271–Glu-314, Ser-315–Gly-371, and Gly-372–Met-404. A Phosphoserine modification is found at Ser-110. Lys-160 bears the N6-acetyllysine; alternate mark. A Glycyl lysine isopeptide (Lys-Gly) (interchain with G-Cter in SUMO2); alternate cross-link involves residue Lys-160. A Phosphoserine modification is found at Ser-355.

The protein belongs to the WD repeat RBAP46/RBAP48/MSI1 family. Binds directly to helix 1 of the histone fold of histone H4, a region that is not accessible when H4 is in chromatin. Subunit of the chromatin assembly factor 1 (CAF-1) complex, which is composed of RBBP4, CHAF1B and CHAF1A. Subunit of the core histone deacetylase (HDAC) complex, which is composed of HDAC1, HDAC2, RBBP4 and RBBP7. The core HDAC complex associates with SIN3A, ARID4B/SAP180, SAP18, SAP30, SAP130, SUDS3/SAP45 and possibly ARID4A/RBP1 and ING1 to form the SIN3 HDAC complex. Component of the nucleosome remodeling and deacetylase (NuRD) repressor complex, composed of core proteins MTA1, MTA2, MTA3, RBBP4, RBBP7, HDAC1, HDAC2, MBD2, MBD3, and peripherally associated proteins CDK2AP1, CDK2AP2, GATAD2A, GATAD2B, CHD3, CHD4 and CHD5. The exact stoichiometry of the NuRD complex is unknown, and some subunits such as MBD2 and MBD3, GATAD2A and GATAD2B, and CHD3, CHD4 and CHD5 define mutually exclusive NuRD complexes. Interacts with ZNF512B; the interaction is direct and may play a role in repressing gene expression. The NuRD complex may also interact with MBD3L1 and MBD3L2. Component of the PRC2 complex, which consists of the core subunits EED, EZH1 or EZH2, SUZ12, and RBBP4, and various combinations of accessory subunits including AEBP2, JARID2, PHF19, MTF2 and EPOP. Forms a monomeric PRC2.2 (class 2) complex consisting of at least SUZ12, RBBP4, AEBP2 and JARID2. Forms a dimeric PRC2.1 (class 1, PRC-PCL) complex consisting of at least SUZ12, RBBP4, and PHF19; PHF19 stabilizes the dimeric structure which enhances PRC2 interaction with chromatin. Component of the NURF-1 ISWI chromatin remodeling complex (also called the nucleosome-remodeling factor (NURF) complex) at least composed of SMARCA1 (isoform 2), BPTF, RBBP4 and RBBP7. Within the complex interacts with isoform 2 of SMARCA1. Component of the BPFT-SMARCA1 complex at least composed of SMARCA1 (isoform 1), BPFT, RBBP4 and RBBP7; the complex is catalytically inactive and does not remodel chromatin. Within the complex interacts with isoform 1 of SMARCA1. Interacts with the ISWI chromatin remodeling complex component SMARCA5; the interaction is direct. Interacts with the viral protein-binding domain of the retinoblastoma protein (RB1). Component of the DREAM complex (also named LINC complex) at least composed of E2F4, E2F5, LIN9, LIN37, LIN52, LIN54, MYBL1, MYBL2, RBL1, RBL2, RBBP4, TFDP1 and TFDP2. The complex exists in quiescent cells where it represses cell cycle-dependent genes. It dissociates in S phase when LIN9, LIN37, LIN52 and LIN54 form a subcomplex that binds to MYBL2. Found in a complex composed of at least SINHCAF, SIN3A, HDAC1, SAP30, RBBP4, OGT and TET1. Interacts with ZNF827; the interaction is direct and recruits RBBP4 to telomeres. Interacts with MTA1; the interaction is direct and mutually exclusive with binding histone H4. Interacts with ARMC12 (via ARM domains). Interacts with BRCA1. Interacts with CDK2AP1. Interacts with CREBBP, and this interaction may be enhanced by the binding of phosphorylated CREB1 to CREBBP. Interacts with ERCC6. Interacts with HDAC7. Interacts with PHF6. Interacts with PWWP2B. Interacts with SPEN/MINT. Interacts with SUV39H1.

Its subcellular location is the nucleus. The protein resides in the chromosome. It is found in the telomere. Functionally, core histone-binding subunit that may target chromatin assembly factors, chromatin remodeling factors and histone deacetylases to their histone substrates in a manner that is regulated by nucleosomal DNA. Component of the chromatin assembly factor 1 (CAF-1) complex, which is required for chromatin assembly following DNA replication and DNA repair. Component of the core histone deacetylase (HDAC) complex, which promotes histone deacetylation and consequent transcriptional repression. Component of the nucleosome remodeling and histone deacetylase complex (the NuRD complex), which promotes transcriptional repression by histone deacetylation and nucleosome remodeling. Component of the PRC2 complex, which promotes repression of homeotic genes during development. Component of the NURF (nucleosome remodeling factor) complex. This chain is Histone-binding protein RBBP4 (RBBP4), found in Pongo abelii (Sumatran orangutan).